A 229-amino-acid polypeptide reads, in one-letter code: ATP synthase subunit a (229 aa).

Transmembrane regions (helical) follow at residues 25 to 45 (ADAI…SILA), 82 to 102 (FFPL…IGLI), 111 to 131 (NINT…IVGI), 142 to 162 (FLGP…IGHF), 181 to 201 (LVLM…MMLM), and 202 to 222 (GVLV…IYIQ).

Belongs to the ATPase A chain family. As to quaternary structure, F-type ATPases have 2 components, CF(1) - the catalytic core - and CF(0) - the membrane proton channel. CF(1) has five subunits: alpha(3), beta(3), gamma(1), delta(1), epsilon(1). CF(0) has three main subunits: a(1), b(2) and c(9-12). The alpha and beta chains form an alternating ring which encloses part of the gamma chain. CF(1) is attached to CF(0) by a central stalk formed by the gamma and epsilon chains, while a peripheral stalk is formed by the delta and b chains.

It localises to the cell inner membrane. Functionally, key component of the proton channel; it plays a direct role in the translocation of protons across the membrane. The chain is ATP synthase subunit a from Geotalea daltonii (strain DSM 22248 / JCM 15807 / FRC-32) (Geobacter daltonii).